Consider the following 191-residue polypeptide: MDKTLSREEAKQLMQLLCLDMSCWGNLPLMRRQYLVKCKEYHPDKGGNEESMKLLNSLYLKLQDSVSSVHDLNEEEDNIWQSSQVYCKDLCCNKFRLVGAIYGEYYEAYIMKQWDVCIHGYNHECQCIHCILSKYHKEKYKIYRKPPVWIECYCYKCYREWFFFPISMQTFFFWKVIIFNTEIRAVQPLLR.

M1 bears the N-acetylmethionine; by host mark. Positions 12-80 (QLMQLLCLDM…DLNEEEDNIW (69 aa)) constitute a J domain. Residues 117-130 (CIHGYNHECQCIHC) form a C4-type; atypical zinc finger. Residues 136–157 (HKEKYKIYRKPPVWIECYCYKC) form an H1C3-type; atypical zinc finger.

Interacts with host PPP2R1A; the interaction inhibits PP2A activity.

The protein resides in the host cytoplasm. It localises to the host nucleus. In terms of biological role, promotes efficient viral genome replication by accelerating both G1 and S phase progression of the cell cycle. Inhibits host PP2A by binding to the A subunit, thereby displacing lower affinity regulatory B subunit. Inactivation of PP2A in turn results in the transactivation of cyclin A and cyclin D1 promoters. Late during the infection cycle, ST may induce dephosphorylation of host MTOR, leading to the inhibition of cap-dependent translation. May establish and maintain high levels of viral genomes during persistent infection in cell culture. This Homo sapiens (Human) protein is Small t antigen.